Here is a 117-residue protein sequence, read N- to C-terminus: Toxin CSTX-8 (117 aa).

A signal peptide spans 1 to 20; that stretch reads MKVLVICAVLFLAIFSNSSA. The propeptide occupies 21–47; sequence ETEDDFLEDESFQADDVIPFLASEQVR. 4 disulfides stabilise this stretch: C50-C65, C57-C74, C64-C95, and C76-C93. Residues 82–87 constitute a propeptide that is removed on maturation; it reads RSETDR. At T116 the chain carries Threonine amide.

Belongs to the neurotoxin 19 (CSTX) family. 12 subfamily. Heterodimer of A and B chains; disulfide-linked. Interacts with CSTX-1 (AC P81694), and with CSTX-9 (AC P58604). Expressed by the venom gland.

The protein resides in the secreted. It is found in the target cell membrane. Functionally, synergistic toxin that induces or increases a cytolytic effect when combined with CSTX-1 (AC P81694) or CSTX-9 (AC P58604). When alone, has a weak insecticidal activity, with an unknown molecular target. This Cupiennius salei (American wandering spider) protein is Toxin CSTX-8.